The sequence spans 781 residues: Death domain-containing protein 1 (781 aa).

ZU5 domains follow at residues 167–301 (IMEK…VSCL) and 302–483 (KKES…VLHL). Positions 679 to 764 (DNLLHWLAEE…DLAEELKFKW (86 aa)) constitute a Death domain.

In Homo sapiens (Human), this protein is Death domain-containing protein 1 (DTHD1).